We begin with the raw amino-acid sequence, 219 residues long: 7-cyano-7-deazaguanine synthase (219 aa).

An ATP-binding site is contributed by F10–L20. Positions 188, 197, 200, and 203 each coordinate Zn(2+).

This sequence belongs to the QueC family. As to quaternary structure, homodimer. Zn(2+) is required as a cofactor.

The enzyme catalyses 7-carboxy-7-deazaguanine + NH4(+) + ATP = 7-cyano-7-deazaguanine + ADP + phosphate + H2O + H(+). It participates in purine metabolism; 7-cyano-7-deazaguanine biosynthesis. In terms of biological role, catalyzes the ATP-dependent conversion of 7-carboxy-7-deazaguanine (CDG) to 7-cyano-7-deazaguanine (preQ(0)). In Clostridium botulinum (strain 657 / Type Ba4), this protein is 7-cyano-7-deazaguanine synthase.